The following is a 295-amino-acid chain: Nucleotide-binding protein llmg_1557 (295 aa).

Residue 12 to 19 (GMSGAGKT) coordinates ATP. Residue 63–66 (DMRS) participates in GTP binding.

The protein belongs to the RapZ-like family.

Its function is as follows. Displays ATPase and GTPase activities. In Lactococcus lactis subsp. cremoris (strain MG1363), this protein is Nucleotide-binding protein llmg_1557.